Consider the following 458-residue polypeptide: ATP synthase subunit beta (458 aa).

Gly148 to Thr155 serves as a coordination point for ATP.

Belongs to the ATPase alpha/beta chains family. As to quaternary structure, F-type ATPases have 2 components, CF(1) - the catalytic core - and CF(0) - the membrane proton channel. CF(1) has five subunits: alpha(3), beta(3), gamma(1), delta(1), epsilon(1). CF(0) has three main subunits: a(1), b(2) and c(9-12). The alpha and beta chains form an alternating ring which encloses part of the gamma chain. CF(1) is attached to CF(0) by a central stalk formed by the gamma and epsilon chains, while a peripheral stalk is formed by the delta and b chains.

The protein localises to the cell inner membrane. The enzyme catalyses ATP + H2O + 4 H(+)(in) = ADP + phosphate + 5 H(+)(out). Its function is as follows. Produces ATP from ADP in the presence of a proton gradient across the membrane. The catalytic sites are hosted primarily by the beta subunits. This chain is ATP synthase subunit beta, found in Shewanella loihica (strain ATCC BAA-1088 / PV-4).